The primary structure comprises 169 residues: ATP synthase subunit b (169 aa).

Residues 14-34 (TFLAMLISFLILVFILQQVAF) form a helical membrane-spanning segment.

It belongs to the ATPase B chain family. F-type ATPases have 2 components, F(1) - the catalytic core - and F(0) - the membrane proton channel. F(1) has five subunits: alpha(3), beta(3), gamma(1), delta(1), epsilon(1). F(0) has four main subunits: a(1), b(2) and c(10-14). The alpha and beta chains form an alternating ring which encloses part of the gamma chain. F(1) is attached to F(0) by a central stalk formed by the gamma and epsilon chains, while a peripheral stalk is formed by the delta and b chains.

It localises to the cell membrane. Its function is as follows. F(1)F(0) ATP synthase produces ATP from ADP in the presence of a proton or sodium gradient. F-type ATPases consist of two structural domains, F(1) containing the extramembraneous catalytic core and F(0) containing the membrane proton channel, linked together by a central stalk and a peripheral stalk. During catalysis, ATP synthesis in the catalytic domain of F(1) is coupled via a rotary mechanism of the central stalk subunits to proton translocation. Functionally, component of the F(0) channel, it forms part of the peripheral stalk, linking F(1) to F(0). The chain is ATP synthase subunit b from Heliobacterium modesticaldum (strain ATCC 51547 / Ice1).